Consider the following 386-residue polypeptide: NADPH-dependent alkenal/one oxidoreductase, chloroplastic (386 aa).

It belongs to the zinc-containing alcohol dehydrogenase family. Quinone oxidoreductase subfamily.

The protein resides in the plastid. The protein localises to the chloroplast. In terms of biological role, reduces the double bond in short-chain unsaturated carbonyls. Acts preferentially on alpha,beta-unsaturated ketones rather on alpha,beta-unsaturated aldehydes. Has no activity with (E)-2-hexenal and (E)-2-pentenal. Contributes to detoxify stromal reactive carbonyls produced under oxidative stress. This chain is NADPH-dependent alkenal/one oxidoreductase, chloroplastic, found in Arabidopsis thaliana (Mouse-ear cress).